Reading from the N-terminus, the 549-residue chain is Chaperonin GroEL (549 aa).

ATP-binding positions include 30–33 (TLGP), Lys-51, 87–91 (DGTTT), Gly-415, and Asp-496.

This sequence belongs to the chaperonin (HSP60) family. In terms of assembly, forms a cylinder of 14 subunits composed of two heptameric rings stacked back-to-back. Interacts with the co-chaperonin GroES.

The protein resides in the cytoplasm. The enzyme catalyses ATP + H2O + a folded polypeptide = ADP + phosphate + an unfolded polypeptide.. In terms of biological role, together with its co-chaperonin GroES, plays an essential role in assisting protein folding. The GroEL-GroES system forms a nano-cage that allows encapsulation of the non-native substrate proteins and provides a physical environment optimized to promote and accelerate protein folding. The polypeptide is Chaperonin GroEL (Acidiphilium cryptum (strain JF-5)).